A 200-amino-acid polypeptide reads, in one-letter code: Dephospho-CoA kinase (200 aa).

The DPCK domain occupies 4–200; that stretch reads TIGLTGSVAT…TFIERFVNNK (197 aa). 12-17 contributes to the ATP binding site; it reads ATGKST.

Belongs to the CoaE family.

The protein localises to the cytoplasm. The catalysed reaction is 3'-dephospho-CoA + ATP = ADP + CoA + H(+). It functions in the pathway cofactor biosynthesis; coenzyme A biosynthesis; CoA from (R)-pantothenate: step 5/5. In terms of biological role, catalyzes the phosphorylation of the 3'-hydroxyl group of dephosphocoenzyme A to form coenzyme A. This Listeria innocua serovar 6a (strain ATCC BAA-680 / CLIP 11262) protein is Dephospho-CoA kinase.